We begin with the raw amino-acid sequence, 153 residues long: Large ribosomal subunit protein uL15 (153 aa).

The tract at residues 21–41 (RGIGSGKGKTGGRGIKGQKSR) is disordered. A compositionally biased stretch (gly residues) spans 23 to 35 (IGSGKGKTGGRGI).

It belongs to the universal ribosomal protein uL15 family. Part of the 50S ribosomal subunit.

Binds to the 23S rRNA. This Rickettsia massiliae (strain Mtu5) protein is Large ribosomal subunit protein uL15.